A 261-amino-acid chain; its full sequence is ATP synthase subunit a (261 aa).

6 consecutive transmembrane segments (helical) span residues 45-65 (ITNV…ILVL), 107-127 (VMTL…PLSF), 133-153 (MAVT…LGFM), 162-182 (MFWV…IEVI), 209-229 (IAGF…VTAI), and 232-252 (LELL…CVYL).

The protein belongs to the ATPase A chain family. As to quaternary structure, F-type ATPases have 2 components, CF(1) - the catalytic core - and CF(0) - the membrane proton channel. CF(1) has five subunits: alpha(3), beta(3), gamma(1), delta(1), epsilon(1). CF(0) has four main subunits: a, b, b' and c.

Its subcellular location is the cell inner membrane. In terms of biological role, key component of the proton channel; it plays a direct role in the translocation of protons across the membrane. This is ATP synthase subunit a from Cereibacter sphaeroides (strain ATCC 17029 / ATH 2.4.9) (Rhodobacter sphaeroides).